The chain runs to 288 residues: Acetyl-coenzyme A carboxylase carboxyl transferase subunit beta (288 aa).

Positions 34-288 constitute a CoA carboxyltransferase N-terminal domain; that stretch reads LFAKCPACKH…HLVAFHGGGQ (255 aa). 4 residues coordinate Zn(2+): Cys38, Cys41, Cys56, and Cys59. Residues 38 to 59 form a C4-type zinc finger; sequence CPACKHMIYKKDLGLAKICPTC.

It belongs to the AccD/PCCB family. As to quaternary structure, acetyl-CoA carboxylase is a heterohexamer composed of biotin carboxyl carrier protein (AccB), biotin carboxylase (AccC) and two subunits each of ACCase subunit alpha (AccA) and ACCase subunit beta (AccD). Zn(2+) is required as a cofactor.

It is found in the cytoplasm. The enzyme catalyses N(6)-carboxybiotinyl-L-lysyl-[protein] + acetyl-CoA = N(6)-biotinyl-L-lysyl-[protein] + malonyl-CoA. Its pathway is lipid metabolism; malonyl-CoA biosynthesis; malonyl-CoA from acetyl-CoA: step 1/1. Component of the acetyl coenzyme A carboxylase (ACC) complex. Biotin carboxylase (BC) catalyzes the carboxylation of biotin on its carrier protein (BCCP) and then the CO(2) group is transferred by the transcarboxylase to acetyl-CoA to form malonyl-CoA. The sequence is that of Acetyl-coenzyme A carboxylase carboxyl transferase subunit beta from Streptococcus pyogenes serotype M3 (strain ATCC BAA-595 / MGAS315).